Reading from the N-terminus, the 172-residue chain is MKLLNSLILLVLTCLVSSINTQFISIQKYDFSGNCKNSSDSASSFEASSESAAICMQNDLLSGIVTNEGVCLIFNEIPTTFLISSNGDYVVILLEIEQLKLVNVLLSVLMITTEVHIYFQLKHLSITHLIPTLKYLTMANVMDNGKLVLTIFNITLSINVMLHMKLKLIPFL.

The first 21 residues, 1–21 (MKLLNSLILLVLTCLVSSINT), serve as a signal peptide directing secretion. N-linked (GlcNAc...) asparagine glycosylation is found at Asn37 and Asn153.

Its subcellular location is the secreted. This is Counting factor-associated protein B (cfaB) from Dictyostelium discoideum (Social amoeba).